The sequence spans 376 residues: TraB domain-containing protein (376 aa).

M1 bears the N-acetylmethionine mark. Residues 1 to 34 (MDGEEQQPPHEANVEPVVPSEASEPVPRVLSGDP) form a disordered region. A compositionally biased stretch (low complexity) spans 14–27 (VEPVVPSEASEPVP). T65 bears the Phosphothreonine mark.

This is TraB domain-containing protein (TRABD) from Homo sapiens (Human).